Here is a 485-residue protein sequence, read N- to C-terminus: MSDITSLTLTELVKNIKDKKISSEETTKAFIDRGEKSRDLNTYITEDFSNALLKAKSFDQKPNFDLKLPGVPIAVKDLFCTKDVKTTAGSKILNNFIPPYESTVTQNIWNEGAILLGKLNCDEFAMGSSNETSFFGNVQSPIDKGLVPGGSSGGSASALAANLTPITIGTDTGGSIRQPASFTGTVGLKPTYGSCSRYGIVAFASSLDQAGPMSKDVKDCALLQEIISTYDEKDSTSIDFKRNEYSKELTNNIKGKKIGIPKEYRVDGMPKEIEDLWTKGIEYAKDCGAEIVEISLPHTNYALPTYYIVAPAEASSNLARYDGVKYGFRSKGENLIDMYEKTRSEGFGSEVQRRIMIGTYVLSSGYYDAYYLKAQKVRKLIKNDFDEAYKKVDAILTPSTPSAAFKIGEKTNDPVSMYLNDIFTVPVNLAGLPAISIPAGIDVKGYPLGLQIIGKAFDEQNILNIAYAMEEKIQFKNKITDWWIK.

Catalysis depends on charge relay system residues lysine 76 and serine 151. The Acyl-ester intermediate role is filled by serine 175.

This sequence belongs to the amidase family. GatA subfamily. In terms of assembly, heterotrimer of A, B and C subunits.

It carries out the reaction L-glutamyl-tRNA(Gln) + L-glutamine + ATP + H2O = L-glutaminyl-tRNA(Gln) + L-glutamate + ADP + phosphate + H(+). Functionally, allows the formation of correctly charged Gln-tRNA(Gln) through the transamidation of misacylated Glu-tRNA(Gln) in organisms which lack glutaminyl-tRNA synthetase. The reaction takes place in the presence of glutamine and ATP through an activated gamma-phospho-Glu-tRNA(Gln). In Pelagibacter ubique (strain HTCC1062), this protein is Glutamyl-tRNA(Gln) amidotransferase subunit A.